A 2315-amino-acid polypeptide reads, in one-letter code: Receptor-type tyrosine-protein phosphatase zeta (2315 aa).

Positions 1-24 (MRILKRFLACIQLLCVCRLDWANG) are cleaved as a signal peptide. At 25 to 1636 (YYRQQRKLVE…LAEGLESEKK (1612 aa)) the chain is on the extracellular side. The Alpha-carbonic anhydrase domain occupies 36 to 300 (IGWSYTGALN…KFSRQVFSSY (265 aa)). Disulfide bonds link C56-C240 and C133-C264. N-linked (GlcNAc...) asparagine glycosylation is found at N105, N134, N223, N232, N324, and N381. The region spanning 314–413 (EPENVQADPE…LIVDMPTDNP (100 aa)) is the Fibronectin type-III domain. 2 disordered regions span residues 442 to 462 (IVNP…PQIS) and 477 to 507 (AKTN…SQPV). The span at 496–507 (PNTSLNSTSQPV) shows a compositional bias: polar residues. N497, N501, and N552 each carry an N-linked (GlcNAc...) asparagine glycan. O-linked (Xyl...) (chondroitin sulfate) serine glycosylation is present at S587. N-linked (GlcNAc...) asparagine glycosylation is found at N602 and N629. Residues 628–650 (RNASEDSTSSGSEESLKDPSMEG) are disordered. Position 637 is a phosphoserine; alternate (S637). O-linked (Xyl...) (chondroitin sulfate) serine; alternate glycosylation occurs at S637. S639 carries the phosphoserine modification. An N-linked (GlcNAc...) asparagine glycan is attached at N677. A glycan (O-linked (Xyl...) (chondroitin sulfate) serine) is linked at S997. Residues N1017, N1050, N1082, and N1122 are each glycosylated (N-linked (GlcNAc...) asparagine). Residues 1123–1138 (FSVQPTHTVSQASGDT) show a composition bias toward polar residues. Disordered stretches follow at residues 1123–1160 (FSVQ…SSEM), 1397–1523 (KATS…EEND), 1543–1572 (LTSD…SFAD), and 1584–1621 (AGDS…NSSH). Over residues 1145–1159 (SANSEPASSDPASSE) the composition is skewed to low complexity. The span at 1417-1432 (EDGDTDDDGDDDDDDR) shows a compositional bias: acidic residues. Positions 1450 to 1465 (ESQEKVMNDSDTHENS) are enriched in basic and acidic residues. A glycan (N-linked (GlcNAc...) asparagine) is linked at N1457. 2 stretches are compositionally biased toward polar residues: residues 1466–1479 (LMDQ…SLSE) and 1487–1513 (VTSV…GLSQ). S1549 and S1551 each carry an O-linked (Xyl...) (chondroitin sulfate) serine glycan. Polar residues-rich tracts occupy residues 1554–1572 (GTSD…SFAD) and 1593–1606 (FPQS…SENS). An N-linked (GlcNAc...) asparagine glycan is attached at N1562. N-linked (GlcNAc...) asparagine glycosylation occurs at N1618. Residues 1637 to 1662 (AVIPLVIVSALTFICLVVLVGILIYW) form a helical membrane-spanning segment. Over 1663–2315 (RKCFQTAHFY…NIAESLESLV (653 aa)) the chain is Cytoplasmic. Phosphothreonine is present on residues T1684 and T1687. 2 consecutive Tyrosine-protein phosphatase domains span residues 1717–1992 (FTEE…LVEA) and 2023–2282 (LEKQ…ILSL). Substrate-binding positions include D1901, 1933 to 1939 (CSAGVGR), and Q1977. Catalysis depends on C1933, which acts as the Phosphocysteine intermediate. A Phosphoserine modification is found at S2055.

Belongs to the protein-tyrosine phosphatase family. Receptor class 5 subfamily. As to quaternary structure, the carbonic-anhydrase like domain interacts with CNTN1 (contactin). Interacts with PTN. Interaction with PTN promotes formation of homooligomers; oligomerization impairs phosphatase activity. Interacts (via chondroitin sulfate chains) with MDK (via C-terminal); this interaction is inhibited by PTN; this interaction promotes neuronal migration. As to expression, specifically expressed in the central nervous system, where it is localized in the Purkinje cell layer of the cerebellum, the dentate gyrus, and the subependymal layer of the anterior horn of the lateral ventricle. Developmentally regulated in the brain.

Its subcellular location is the cell membrane. It is found in the secreted. The catalysed reaction is O-phospho-L-tyrosyl-[protein] + H2O = L-tyrosyl-[protein] + phosphate. Protein tyrosine phosphatase that negatively regulates oligodendrocyte precursor proliferation in the embryonic spinal cord. Required for normal differentiation of the precursor cells into mature, fully myelinating oligodendrocytes. May play a role in protecting oligondendrocytes against apoptosis. May play a role in the establishment of contextual memory, probably via the dephosphorylation of proteins that are part of important signaling cascades. The chain is Receptor-type tyrosine-protein phosphatase zeta (PTPRZ1) from Homo sapiens (Human).